The chain runs to 504 residues: D-alanine--D-alanyl carrier protein ligase (504 aa).

152–153 (TS) serves as a coordination point for ATP. D197 provides a ligand contact to D-alanine. 292–297 (NTYGPT) contacts ATP. A D-alanine-binding site is contributed by V301. ATP is bound by residues D383, 394–397 (YNGR), and K492. A D-alanine-binding site is contributed by K492.

This sequence belongs to the ATP-dependent AMP-binding enzyme family. DltA subfamily.

It is found in the cytoplasm. The enzyme catalyses holo-[D-alanyl-carrier protein] + D-alanine + ATP = D-alanyl-[D-alanyl-carrier protein] + AMP + diphosphate. It functions in the pathway cell wall biogenesis; lipoteichoic acid biosynthesis. Catalyzes the first step in the D-alanylation of lipoteichoic acid (LTA), the activation of D-alanine and its transfer onto the D-alanyl carrier protein (Dcp) DltC. In an ATP-dependent two-step reaction, forms a high energy D-alanyl-AMP intermediate, followed by transfer of the D-alanyl residue as a thiol ester to the phosphopantheinyl prosthetic group of the Dcp. D-alanylation of LTA plays an important role in modulating the properties of the cell wall in Gram-positive bacteria, influencing the net charge of the cell wall. The chain is D-alanine--D-alanyl carrier protein ligase from Bacillus cytotoxicus (strain DSM 22905 / CIP 110041 / 391-98 / NVH 391-98).